The primary structure comprises 259 residues: Cell division protein DivIB (259 aa).

Residues 1-27 are Cytoplasmic-facing; the sequence is MADGKVIDIEQKVPDFREQRRRKSRRR. Residues 28-45 form a helical membrane-spanning segment; sequence LVLYISILAFFLLFVYYF. Residues 46–259 lie on the Extracellular side of the membrane; the sequence is QSDYSTVGHV…QEEEEIEIEE (214 aa). The POTRA domain maps to 50 to 118; that stretch reads STVGHVDVYG…RSITLYVDEY (69 aa).

Belongs to the FtsQ/DivIB family. DivIB subfamily.

Its subcellular location is the cell membrane. Cell division protein that may be involved in stabilizing or promoting the assembly of the division complex. This Bacillus selenitireducens (strain ATCC 700615 / DSM 15326 / MLS10) protein is Cell division protein DivIB.